The following is a 152-amino-acid chain: Deoxyuridine 5'-triphosphate nucleotidohydrolase (152 aa).

Substrate-binding positions include 72–74 (RSG), asparagine 85, and 89–91 (TID).

This sequence belongs to the dUTPase family. Requires Mg(2+) as cofactor.

The enzyme catalyses dUTP + H2O = dUMP + diphosphate + H(+). Its pathway is pyrimidine metabolism; dUMP biosynthesis; dUMP from dCTP (dUTP route): step 2/2. In terms of biological role, this enzyme is involved in nucleotide metabolism: it produces dUMP, the immediate precursor of thymidine nucleotides and it decreases the intracellular concentration of dUTP so that uracil cannot be incorporated into DNA. The sequence is that of Deoxyuridine 5'-triphosphate nucleotidohydrolase from Rhodopseudomonas palustris (strain BisB5).